The sequence spans 122 residues: Large ribosomal subunit protein uL14 (122 aa).

It belongs to the universal ribosomal protein uL14 family. Part of the 50S ribosomal subunit. Forms a cluster with proteins L3 and L19. In the 70S ribosome, L14 and L19 interact and together make contacts with the 16S rRNA in bridges B5 and B8.

Its function is as follows. Binds to 23S rRNA. Forms part of two intersubunit bridges in the 70S ribosome. In Methylobacillus flagellatus (strain ATCC 51484 / DSM 6875 / VKM B-1610 / KT), this protein is Large ribosomal subunit protein uL14.